We begin with the raw amino-acid sequence, 317 residues long: Insulin-like growth factor-binding protein 2 (317 aa).

The N-terminal stretch at 1–33 (MQPRLGGPALLLLPPLLLLLLLGAGGGDCGARA) is a signal peptide. An IGFBP N-terminal domain is found at 35–126 (VLFRCPPCTP…VHGEGTCEKH (92 aa)). 6 disulfides stabilise this stretch: C39–C76, C42–C78, C50–C79, C68–C82, C90–C103, and C97–C123. 2 disordered regions span residues 126–146 (HGDA…EEHS) and 190–218 (QHRQ…ARTP). Residues 216-298 (RTPCQQELDQ…APTIRGDPEC (83 aa)) enclose the Thyroglobulin type-1 domain. 3 disulfide bridges follow: C219-C253, C264-C275, and C277-C298. Residues 293–295 (RGD) carry the Cell attachment site motif.

Interacts with IGF1. Interacts with IGF2. Interacts (via RGD motif) with integrin alpha5/ITGA5; this interaction induces cell migration, adhesion or apoptosis according to the context. Interacts with PTPRB; this interaction leads to PTPRB dimerization and inactivation. In terms of processing, cleaved by MMP9 leading to release of free IGF2 from IGFBP2-IGF2 complex, which contributes to enhance the motility and the growth of astrocytes. Post-translationally, O-glycosylated.

It localises to the secreted. Functionally, multifunctional protein that plays a critical role in regulating the availability of IGFs such as IGF1 and IGF2 to their receptors and thereby regulates IGF-mediated cellular processes including proliferation, differentiation, and apoptosis in a cell-type specific manner. Functions coordinately with receptor protein tyrosine phosphatase beta/PTPRB and the IGF1 receptor to regulate IGF1-mediated signaling by stimulating the phosphorylation of PTEN leading to its inactivation and AKT1 activation. Plays a positive role in cell migration via interaction with integrin alpha5/ITGA5 through an RGD motif. Additionally, interaction with ITGA5/ITGB1 enhances the adhesion of endothelial progenitor cells to endothelial cells. Upon mitochondrial damage, facilitates apoptosis with ITGA5 of podocytes, and then activates the phosphorylation of focal adhesion kinase (FAK)-mediated mitochondrial injury. The polypeptide is Insulin-like growth factor-binding protein 2 (IGFBP2) (Bos taurus (Bovine)).